A 428-amino-acid chain; its full sequence is Glutamate-1-semialdehyde 2,1-aminomutase (428 aa).

The residue at position 267 (lysine 267) is an N6-(pyridoxal phosphate)lysine.

Belongs to the class-III pyridoxal-phosphate-dependent aminotransferase family. HemL subfamily. As to quaternary structure, homodimer. It depends on pyridoxal 5'-phosphate as a cofactor.

The protein resides in the cytoplasm. The catalysed reaction is (S)-4-amino-5-oxopentanoate = 5-aminolevulinate. It functions in the pathway porphyrin-containing compound metabolism; protoporphyrin-IX biosynthesis; 5-aminolevulinate from L-glutamyl-tRNA(Glu): step 2/2. This is Glutamate-1-semialdehyde 2,1-aminomutase from Desulforapulum autotrophicum (strain ATCC 43914 / DSM 3382 / VKM B-1955 / HRM2) (Desulfobacterium autotrophicum).